The chain runs to 135 residues: Fatty acid-binding protein 5 (135 aa).

An N-acetylalanine modification is found at A2. A Phosphoserine modification is found at S3. Positions 24 to 34 (KELGVGLALRK) match the Nuclear localization signal motif. Residues C43, T56, and R109 each contribute to the 1-eicosanoylglycerol site. A disulfide bridge connects residues C120 and C127. Residue 129 to 131 (RVY) participates in 1-eicosanoylglycerol binding. Position 129 to 131 (129 to 131 (RVY)) interacts with (9Z,12Z)-octadecadienoate. Y131 is a binding site for hexadecanoate. Y131 contributes to the N-eicosanoyl ethanolamine binding site. Position 131 is a phosphotyrosine (Y131).

The protein belongs to the calycin superfamily. Fatty-acid binding protein (FABP) family. As to quaternary structure, monomer. In terms of tissue distribution, widely expressed.

It is found in the cytoplasm. Its subcellular location is the nucleus. The protein localises to the synapse. It localises to the postsynaptic density. The protein resides in the secreted. It carries out the reaction hexadecanoate(out) = hexadecanoate(in). The catalysed reaction is (9Z,12Z)-octadecadienoate(out) = (9Z,12Z)-octadecadienoate(in). It catalyses the reaction (9Z)-octadecenoate(out) = (9Z)-octadecenoate(in). Intracellular carrier for long-chain fatty acids and related active lipids, such as endocannabinoids, that regulate the metabolism and actions of the ligands they bind. In addition to the cytosolic transport, selectively delivers specific fatty acids from the cytosol to the nucleus, wherein they activate nuclear receptors. Delivers retinoic acid to the nuclear receptor peroxisome proliferator-activated receptor delta; which promotes proliferation and survival. May also serve as a synaptic carrier of endocannabinoid at central synapses and thus controls retrograde endocannabinoid signaling. Modulates inflammation by regulating PTGES induction via NF-kappa-B activation, and prostaglandin E2 (PGE2) biosynthesis during inflammation. May be involved in keratinocyte differentiation. The protein is Fatty acid-binding protein 5 of Mus musculus (Mouse).